A 187-amino-acid chain; its full sequence is Protein GrpE (187 aa).

The segment at 1–30 (MEKKETKNETEKTNKQDNKNTKSQKKENLN) is disordered.

Belongs to the GrpE family. Homodimer.

The protein localises to the cytoplasm. Participates actively in the response to hyperosmotic and heat shock by preventing the aggregation of stress-denatured proteins, in association with DnaK and GrpE. It is the nucleotide exchange factor for DnaK and may function as a thermosensor. Unfolded proteins bind initially to DnaJ; upon interaction with the DnaJ-bound protein, DnaK hydrolyzes its bound ATP, resulting in the formation of a stable complex. GrpE releases ADP from DnaK; ATP binding to DnaK triggers the release of the substrate protein, thus completing the reaction cycle. Several rounds of ATP-dependent interactions between DnaJ, DnaK and GrpE are required for fully efficient folding. The chain is Protein GrpE from Borreliella afzelii (strain PKo) (Borrelia afzelii).